Here is a 514-residue protein sequence, read N- to C-terminus: 2,3-bisphosphoglycerate-independent phosphoglycerate mutase (514 aa).

Mn(2+) is bound by residues aspartate 14 and serine 64. Serine 64 serves as the catalytic Phosphoserine intermediate. Substrate contacts are provided by residues histidine 125, 155-156, arginine 187, arginine 193, 263-266, and lysine 336; these read RD and RADR. Residues aspartate 403, histidine 407, aspartate 444, histidine 445, and histidine 463 each contribute to the Mn(2+) site.

Belongs to the BPG-independent phosphoglycerate mutase family. Monomer. The cofactor is Mn(2+).

It catalyses the reaction (2R)-2-phosphoglycerate = (2R)-3-phosphoglycerate. Its pathway is carbohydrate degradation; glycolysis; pyruvate from D-glyceraldehyde 3-phosphate: step 3/5. Its function is as follows. Catalyzes the interconversion of 2-phosphoglycerate and 3-phosphoglycerate. This is 2,3-bisphosphoglycerate-independent phosphoglycerate mutase from Salmonella choleraesuis (strain SC-B67).